A 94-amino-acid polypeptide reads, in one-letter code: Mitochondrial import inner membrane translocase subunit Tim8 A (94 aa).

A Twin CX3C motif motif is present at residues 47 to 70 (CWDKCIDRPGNKLDSRTESCLVSC). 2 cysteine pairs are disulfide-bonded: cysteine 47-cysteine 70 and cysteine 51-cysteine 66.

The protein belongs to the small Tim family. Heterohexamer; composed of 3 copies of TIMM8A and 3 copies of TIMM13, named soluble 70 kDa complex. Associates with the TIM22 complex, whose core is composed of TIMM22.

It localises to the mitochondrion inner membrane. Mitochondrial intermembrane chaperone that participates in the import and insertion of some multi-pass transmembrane proteins into the mitochondrial inner membrane. Also required for the transfer of beta-barrel precursors from the TOM complex to the sorting and assembly machinery (SAM complex) of the outer membrane. Acts as a chaperone-like protein that protects the hydrophobic precursors from aggregation and guide them through the mitochondrial intermembrane space. The TIMM8-TIMM13 complex mediates the import of some proteins while the predominant TIMM9-TIMM10 70 kDa complex mediates the import of much more proteins. This chain is Mitochondrial import inner membrane translocase subunit Tim8 A (timm8a), found in Xenopus laevis (African clawed frog).